Reading from the N-terminus, the 275-residue chain is 3-methyl-2-oxobutanoate hydroxymethyltransferase (275 aa).

Asp-44 and Asp-83 together coordinate Mg(2+). 3-methyl-2-oxobutanoate is bound by residues 44–45, Asp-83, and Lys-113; that span reads DS. Position 115 (Glu-115) interacts with Mg(2+). Catalysis depends on Glu-182, which acts as the Proton acceptor.

Belongs to the PanB family. In terms of assembly, homodecamer; pentamer of dimers. Mg(2+) serves as cofactor.

It is found in the cytoplasm. It carries out the reaction 3-methyl-2-oxobutanoate + (6R)-5,10-methylene-5,6,7,8-tetrahydrofolate + H2O = 2-dehydropantoate + (6S)-5,6,7,8-tetrahydrofolate. Its pathway is cofactor biosynthesis; (R)-pantothenate biosynthesis; (R)-pantoate from 3-methyl-2-oxobutanoate: step 1/2. Functionally, catalyzes the reversible reaction in which hydroxymethyl group from 5,10-methylenetetrahydrofolate is transferred onto alpha-ketoisovalerate to form ketopantoate. The chain is 3-methyl-2-oxobutanoate hydroxymethyltransferase from Clostridium botulinum (strain Loch Maree / Type A3).